The chain runs to 425 residues: Histidine--tRNA ligase (425 aa).

This sequence belongs to the class-II aminoacyl-tRNA synthetase family. Homodimer.

The protein resides in the cytoplasm. The catalysed reaction is tRNA(His) + L-histidine + ATP = L-histidyl-tRNA(His) + AMP + diphosphate + H(+). This chain is Histidine--tRNA ligase, found in Listeria monocytogenes serotype 4b (strain F2365).